The following is a 214-amino-acid chain: Protein DMP6 (214 aa).

The next 4 helical transmembrane spans lie at 52-72 (LANL…PICT), 83-103 (FMTA…SFTD), 143-163 (FIDF…VLFD), and 178-198 (VVEL…MVFA).

It belongs to the plant DMP1 protein family. In terms of tissue distribution, expressed constitutively in leaves, stems, flowers, siliques and roots (e.g. root hairs).

It localises to the vacuole membrane. Its function is as follows. Involved in membrane remodeling. This Arabidopsis thaliana (Mouse-ear cress) protein is Protein DMP6.